The chain runs to 386 residues: Bifunctional desaturase/conjugase FADX (386 aa).

A disordered region spans residues 1-28; that stretch reads MGAGGRMSVAPNNSKCEKKESRSVKRVP. 2 consecutive transmembrane segments (helical) span residues 65 to 85 and 87 to 107; these read LSFI…SPIT and IAWP…WVLG. The short motif at 108 to 112 is the Histidine box-1 element; it reads HECGH. The Histidine box-2 motif lies at 144-148; that stretch reads HRRHH. The next 3 membrane-spanning stretches (helical) occupy residues 182–202, 228–248, and 250–270; these read ALTL…FNVS, IYIS…IAMA, and GLAW…ALVV. Residues 318–322 carry the Histidine box-3 motif; sequence HVIHH.

This sequence belongs to the fatty acid desaturase type 1 family. In terms of tissue distribution, expressed exclusively in developing seeds.

The protein localises to the endoplasmic reticulum membrane. The catalysed reaction is a (9Z,12Z)-octadecadienoyl-containing glycerolipid + 2 Fe(II)-[cytochrome b5] + O2 + 2 H(+) = a (9Z,11E,13E)-octadecatrienoyl-containing glycerolipid + 2 Fe(III)-[cytochrome b5] + 2 H2O. It carries out the reaction (9Z,12Z,15Z)-octadecatrienoyl-containing glycerolipid + 2 Fe(II)-[cytochrome b5] + O2 + 2 H(+) = a (9Z,11E,13E,15Z)-octadecatetraenoyl-containing glycerolipid + 2 Fe(III)-[cytochrome b5] + 2 H2O. It catalyses the reaction a (9Z)-octadecenoyl-containing glycerolipid + 2 Fe(II)-[cytochrome b5] + O2 + 2 H(+) = a (9Z,12E)-octadecadienoyl-containing glycerolipid + 2 Fe(III)-[cytochrome b5] + 2 H2O. The enzyme catalyses a (9Z)-hexadecenoyl-containing glycerolipid + 2 Fe(II)-[cytochrome b5] + O2 + 2 H(+) = a (9Z,12E)-hexadecadienoyl-containing glycerolipid + 2 Fe(III)-[cytochrome b5] + 2 H2O. It functions in the pathway lipid metabolism; polyunsaturated fatty acid biosynthesis. Functionally, converts linoleic acid to alpha-eleostearic acid (18:3(9Z,11E,13E)) and alpha-linolenic acid to alpha-parinaric acid (18:4(9Z,11E,13E,15Z)). Converts a single cis double bond at carbon 12 to two conjugated trans bonds at positions 11 and 13. Can also act as a 12(E) desaturase when acting on the monounsaturated fatty acids oleate and palmitoleate, stereoselectively introducing a trans double bond. This is Bifunctional desaturase/conjugase FADX from Vernicia fordii (Tung).